The sequence spans 256 residues: MYSTKYRRGFLANQGRGYPRHSTGKRSRNVSRIDFKRRSSKYVHGNDDSKMANQRIHENQFGPEFVMVHNTAISTFITFPSLGKTEPSRSRSYIKLKRLRFKGTVKIERVHVDLSMDGPSPKIEGVFSLVVVVDRQPHLSPTGCLHTFDELFGARIHSHGNLAVSSALKDRFYIRHVFKRVISVEKDSTMIDLEGMTSFTNRRFNCWSAFKDFDRQACNGVYGNISKNAILVYYCWMSDIVSKASTFVSFDLDYVG.

Positions 21 to 42 (HSTGKRSRNVSRIDFKRRSSKY) match the Bipartite nuclear localization signal motif. The Nuclear localization signal motif lies at 81–96 (SLGKTEPSRSRSYIKL). Residues 150-187 (ELFGARIHSHGNLAVSSALKDRFYIRHVFKRVISVEKD) are interaction with Arabidopsis thaliana NSI protein.

Belongs to the begomovirus nuclear shuttle protein family. Binds to single-stranded and double-stranded viral DNA. Interacts with the host nuclear shuttle interacting (NSI) protein. This interaction may allow NSP to recruit NSI monomers to the viral genome and thus regulate nuclear export of viral genome by NSP.

Its subcellular location is the host nucleus. The protein localises to the host cytoplasm. The protein resides in the host cell membrane. Its function is as follows. Binds to the genomic viral ssDNA, shuttles it into and out of the cell nucleus. Begomoviruses use 2 proteins to transport their DNA from cell to cell. The nuclear shuttle protein (NSP) shuttles it between nucleus and cytoplasm and the movement protein (MP) probably transports the DNA-NSP complex to the cell periphery and facilitates movement across the cell wall. This Solanum lycopersicum (Tomato) protein is Nuclear shuttle protein.